A 281-amino-acid chain; its full sequence is Diaminopimelate epimerase (281 aa).

Substrate-binding residues include N11 and N65. C74 acts as the Proton donor in catalysis. Residues 75–76 (GN), N164, N197, and 215–216 (ER) contribute to the substrate site. The active-site Proton acceptor is the C224. A substrate-binding site is contributed by 225–226 (GT).

This sequence belongs to the diaminopimelate epimerase family. Homodimer.

It is found in the cytoplasm. It carries out the reaction (2S,6S)-2,6-diaminopimelate = meso-2,6-diaminopimelate. It functions in the pathway amino-acid biosynthesis; L-lysine biosynthesis via DAP pathway; DL-2,6-diaminopimelate from LL-2,6-diaminopimelate: step 1/1. Catalyzes the stereoinversion of LL-2,6-diaminopimelate (L,L-DAP) to meso-diaminopimelate (meso-DAP), a precursor of L-lysine and an essential component of the bacterial peptidoglycan. The polypeptide is Diaminopimelate epimerase (Heliobacterium modesticaldum (strain ATCC 51547 / Ice1)).